The primary structure comprises 285 residues: NADPH-dependent 7-cyano-7-deazaguanine reductase (285 aa).

80 to 82 serves as a coordination point for substrate; it reads VES. Position 82–83 (82–83) interacts with NADPH; the sequence is SK. C191 acts as the Thioimide intermediate in catalysis. D198 acts as the Proton donor in catalysis. 231-232 contacts substrate; it reads HE. 260 to 261 provides a ligand contact to NADPH; the sequence is RG.

Belongs to the GTP cyclohydrolase I family. QueF type 2 subfamily. Homodimer.

Its subcellular location is the cytoplasm. It carries out the reaction 7-aminomethyl-7-carbaguanine + 2 NADP(+) = 7-cyano-7-deazaguanine + 2 NADPH + 3 H(+). It participates in tRNA modification; tRNA-queuosine biosynthesis. Its function is as follows. Catalyzes the NADPH-dependent reduction of 7-cyano-7-deazaguanine (preQ0) to 7-aminomethyl-7-deazaguanine (preQ1). In Psychrobacter cryohalolentis (strain ATCC BAA-1226 / DSM 17306 / VKM B-2378 / K5), this protein is NADPH-dependent 7-cyano-7-deazaguanine reductase.